A 148-amino-acid chain; its full sequence is NADH-quinone oxidoreductase subunit A (148 aa).

3 helical membrane-spanning segments follow: residues 14–34, 68–88, and 98–118; these read WAFA…LVGG, FYLV…LYAW, and VGFV…VYLV.

Belongs to the complex I subunit 3 family. NDH-1 is composed of 13 different subunits. Subunits NuoA, H, J, K, L, M, N constitute the membrane sector of the complex.

The protein resides in the cell inner membrane. It catalyses the reaction a quinone + NADH + 5 H(+)(in) = a quinol + NAD(+) + 4 H(+)(out). Functionally, NDH-1 shuttles electrons from NADH, via FMN and iron-sulfur (Fe-S) centers, to quinones in the respiratory chain. The immediate electron acceptor for the enzyme in this species is believed to be ubiquinone. Couples the redox reaction to proton translocation (for every two electrons transferred, four hydrogen ions are translocated across the cytoplasmic membrane), and thus conserves the redox energy in a proton gradient. The chain is NADH-quinone oxidoreductase subunit A from Klebsiella pneumoniae subsp. pneumoniae (strain ATCC 700721 / MGH 78578).